Consider the following 157-residue polypeptide: Thioredoxin 2 (157 aa).

Positions 1-22 are cleaved as a signal peptide; the sequence is MKHILALVVFIISFFCFKDVNC. In terms of domain architecture, Thioredoxin spans 46–157; that stretch reads LRMYNKMPRL…ELTSTIRKHL (112 aa). Residues cysteine 82 and cysteine 85 each act as nucleophile in the active site. A disulfide bridge connects residues cysteine 82 and cysteine 85.

It belongs to the thioredoxin family. Monomer. Component of the translocon PTEX complex composed of HSP101, EXP2, PTEX150, PTEX88 and TRX2. In terms of processing, the disulfide bond between Cys-82 and Cys-85 acts as a redox-active center and is reduced by thioredoxin reductase TRXR.

In terms of biological role, participates in various redox reactions through the reversible oxidation of its active center dithiol to a disulfide and catalyzes dithiol-disulfide exchange reactions. As part of the translocon PTEX complex, plays a role in the export of parasite proteins into the host erythrocyte. The translocon PTEX complex is a multi-protein machinery resident in the parasite parasitophorous vacuolar membrane, responsible for protein secretion into host cells. May contribute to the unfolding of proteins containing the PEXEL localization motif before their passage through the translocon or regulate the PTEX complex function. This Plasmodium berghei (strain Anka) protein is Thioredoxin 2.